Reading from the N-terminus, the 310-residue chain is Olfactory receptor 8B12 (310 aa).

Residues 1-24 lie on the Extracellular side of the membrane; the sequence is MAAKNSSVTEFILEGLTHQPGLRI. N-linked (GlcNAc...) asparagine glycosylation is present at Asn-5. Residues 25–45 form a helical membrane-spanning segment; the sequence is PLFFLFLGFYTVTVVGNLGLI. The Cytoplasmic segment spans residues 46–53; that stretch reads TLIGLNSH. The chain crosses the membrane as a helical span at residues 54–74; the sequence is LHTPMYFFLFNLSLIDFCFST. The Extracellular portion of the chain corresponds to 75–98; that stretch reads TITPKMLMSFVSRKNIISFTGCMT. The cysteines at positions 96 and 188 are disulfide-linked. Residues 99-119 traverse the membrane as a helical segment; that stretch reads QLFFFCFFVVSESFILSAMAY. Residues 120–138 lie on the Cytoplasmic side of the membrane; sequence DRYVAICNPLLYTVTMSCQ. A helical membrane pass occupies residues 139-159; that stretch reads VCLLLLLGAYGMGFAGAMAHT. At 160-196 the chain is on the extracellular side; sequence GSIMNLTFCADNLVNHFMCDILPLLELSCNSSYMNEL. 2 N-linked (GlcNAc...) asparagine glycosylation sites follow: Asn-164 and Asn-189. The helical transmembrane segment at 197 to 216 threads the bilayer; that stretch reads VVFIVVAVDVGMPIVTVFIS. The Cytoplasmic portion of the chain corresponds to 217–236; it reads YALILSSILHNSSTEGRSKA. The helical transmembrane segment at 237 to 257 threads the bilayer; the sequence is FSTCSSHIIVVSLFFGSGAFM. Residues 258–270 are Extracellular-facing; the sequence is YLKPLSILPLEQG. Residues 271–291 traverse the membrane as a helical segment; sequence KVSSLFYTIIVPVLNPLIYSL. At 292 to 310 the chain is on the cytoplasmic side; it reads RNKDVKVALRRTLGRKIFS.

Belongs to the G-protein coupled receptor 1 family.

It localises to the cell membrane. Its function is as follows. Odorant receptor. This Homo sapiens (Human) protein is Olfactory receptor 8B12 (OR8B12).